We begin with the raw amino-acid sequence, 399 residues long: S-adenosylmethionine synthase (399 aa).

His17 contacts ATP. A Mg(2+)-binding site is contributed by Asp19. Residue Glu45 coordinates K(+). L-methionine contacts are provided by Glu58 and Gln101. The segment at 101 to 111 (QSADIAMGVDQ) is flexible loop. Residues 177–179 (DGK), 244–245 (RF), Asp253, 259–260 (RK), Ala276, and Lys280 each bind ATP. Asp253 contacts L-methionine. Residue Lys284 coordinates L-methionine.

It belongs to the AdoMet synthase family. Homotetramer; dimer of dimers. Mg(2+) serves as cofactor. The cofactor is K(+).

It is found in the cytoplasm. It carries out the reaction L-methionine + ATP + H2O = S-adenosyl-L-methionine + phosphate + diphosphate. It functions in the pathway amino-acid biosynthesis; S-adenosyl-L-methionine biosynthesis; S-adenosyl-L-methionine from L-methionine: step 1/1. Its function is as follows. Catalyzes the formation of S-adenosylmethionine (AdoMet) from methionine and ATP. The overall synthetic reaction is composed of two sequential steps, AdoMet formation and the subsequent tripolyphosphate hydrolysis which occurs prior to release of AdoMet from the enzyme. This is S-adenosylmethionine synthase from Bacillus cereus (strain B4264).